The primary structure comprises 423 residues: MALASGPARRVLARPWGLGLEGCGVPRRGAYEWGVRSTRKPEPPPLDRVYEIPGLEPITFAGKMHFMPGLARPVFPPWDPGWTHPKFRRLPPLQEHPLYKDEVCYIFHQRCRLLEGVKQALWLTKTKLIEGLPEKVLSLADNPRNHIENQDERVLNVISHARLWHSTEDIPKRETYCPVIVDSLIQLCKSQILKHPSLARRICAQKNMLSTTWKRESTLIQVHGSSGAQLNAKDPLPPIASREEVEATKNHVLETFSPISPTISLQECHIYDVNDDTGFREGYPYPCPHTLYLLESANLRAHRFQPDQLRAKMILFAFGNALAQARLLYGNDPKVLEQPVVVQSVGTDGRVFQFLVLQLNTTDLASEEGIKNLVWVDSDQLLYQHFWCLPVIKKKVVVEPVGPTGFQPETFRKFLALYLHGAV.

A mitochondrion-targeting transit peptide spans 1–29; sequence MALASGPARRVLARPWGLGLEGCGVPRRG.

This sequence belongs to the mitochondrion-specific ribosomal protein mL37 family. As to quaternary structure, component of the mitochondrial ribosome large subunit (39S) which comprises a 16S rRNA and about 50 distinct proteins.

The protein resides in the mitochondrion. In Bos taurus (Bovine), this protein is Large ribosomal subunit protein mL37 (MRPL37).